We begin with the raw amino-acid sequence, 307 residues long: Ribosomal RNA small subunit methyltransferase H (307 aa).

S-adenosyl-L-methionine contacts are provided by residues 34–36 (GGH), D54, F79, D101, and Q108.

It belongs to the methyltransferase superfamily. RsmH family.

It localises to the cytoplasm. The enzyme catalyses cytidine(1402) in 16S rRNA + S-adenosyl-L-methionine = N(4)-methylcytidine(1402) in 16S rRNA + S-adenosyl-L-homocysteine + H(+). Its function is as follows. Specifically methylates the N4 position of cytidine in position 1402 (C1402) of 16S rRNA. The protein is Ribosomal RNA small subunit methyltransferase H of Vesicomyosocius okutanii subsp. Calyptogena okutanii (strain HA).